Consider the following 395-residue polypeptide: GPI-anchor transamidase (395 aa).

The N-terminal stretch at 1-27 is a signal peptide; sequence MAVTDSLSRAASTLAAVLLLSFGSVAA. The Lumenal portion of the chain corresponds to 28–368; sequence SHIEDQAEQF…PKLKDWHPPG (341 aa). Residues Asp79, Ile82, Glu118, and Asp120 each coordinate Ca(2+). His164 functions as the Proton donor in the catalytic mechanism. Cys206 functions as the Nucleophile; acyl-thioester intermediate in the catalytic mechanism. A protein-binding residues include Cys206, Ser232, and Ser234. Residues 231 to 236 are autoinhibitory loop; that stretch reads DSLSHQ. The cysteines at positions 275 and 280 are disulfide-linked. Residues 369 to 385 form a helical membrane-spanning segment; that stretch reads GFILGLWALIIMVFFKT. Topologically, residues 386–395 are cytoplasmic; sequence YGIKHMKFIF.

Belongs to the peptidase C13 family. Heteropentamer. Part of the GPI-anchor transamidase complex, consisting of PIGK, PIGT, PIGS, PIGU and GAA1. Interacts with GPAA1. Interacts with PIGT; this interaction, via a disulfide link, stabilizes the expression of GAA1 and PIGK and links them to PIGS. The disulfide bond between PIGK/GPI8 and PIGT is important for normal enzyme activity.

The protein localises to the endoplasmic reticulum membrane. It participates in glycolipid biosynthesis; glycosylphosphatidylinositol-anchor biosynthesis. In the absence of proproteins substrates, exists in an inactive state with a disrupted catalytic site by an autoinhibitory loop. The binding of proprotein substrates, particularly the CSP region, to GPI-T triggers concerted conformational changes that alleviate the inhibition by the autoinhibitory loop. Meanwhile, proprotein residues near the omega- site induce the formation of a catalytic cleft for catalysis, following which the products are released and GPI-T reverts to the inactive state. Functionally, catalytic subunit of the glycosylphosphatidylinositol-anchor (GPI-anchor) transamidase (GPI-T) complex that catalyzes the formation of the linkage between a proprotein and a GPI-anchor and participates in GPI anchored protein biosynthesis. Recognizes diverse proproteins at a C-terminal signal peptide (CSP) region that lacks consensus sequence and replaces it with a GPI-anchor via a transamidation reaction. Transamidation catalysis reaction follows a two-phase mechanism. In the acyl-enzyme phase, the carbonyl group of the proproteins's omega-site undergoes a nucleophilic attack forming an enzyme-substrate thioester bond. Followed by a general acid catalysis that allows CSP releasing, regenerating the carbonyl, and forming the acyl-enzyme intermediate. In the GPI-anchor attachment phase, the amino group of the GPI-anchor's ethanolamine phosphate, the one on third mannose (EtNP3), mediates a nucleophilic attack on the carbonyl of the acyl-enzyme intermediate, replacing the CSP, allowing GPI-anchor attachment to the omega-residue, therefore forming the product and freeing the enzyme. In Pongo abelii (Sumatran orangutan), this protein is GPI-anchor transamidase.